Here is a 637-residue protein sequence, read N- to C-terminus: MAKTIRLTTAQALVKFLNAQYLHADGKEEPFVEGIFTIFGHGNVLGIGQALEQDAGRLNVWQGKNEQGMAHAAMAFSKQMLRKKIYAVTTSVGPGAANLVAAAGTALANNIPVLLLPADTFATRQPDPVLQQFEQEYSQAVTTNDALKPVSRYWDRITRPEQLMSSLIRAFEVMTDPGKAGPATICIAQDVEGEAYEYPEEFFRKRIHYLERRKPTEREIEEALERIRRSKRPLLVVGGGAKYSEAKEELVALSEQCGIPLVETQAGKATVAADFANNLGGLGVTGTLAANKAAREADLVIGVGTRYTDFATSSKTAFDFEHTTFLNINVSRMQTYKLDAYQVVADAKETLSLLISRLKTYRSAFGDRIAALKEEWLAERNRLKSVVFNRKTFVPEVKEHFSQEKLNEYADALGTELPQTTALLAINETIDEDSTIICSSGSLPGDLQRLWHANEPNTYHLEYGYSCMGYEISGALGIKLAEPEREVYSIVGDGSFLMLHSELITAIQYNKKINILLFDNAGFGCISNLQMDHGGGSYYCEFLTADNQVMNIDYAKVAEGYGAKTYRANTVEQLKAALKDAKKQETSTLIEMKVLPKTMTDGYESWWNVGVAEVAASQSIQDAYQARQAKLKEAKHY.

A thiamine diphosphate-binding site is contributed by Glu66. The interval 442-522 (SLPGDLQRLW…INILLFDNAG (81 aa)) is thiamine pyrophosphate binding. Asp493 and Asn520 together coordinate Mg(2+).

This sequence belongs to the TPP enzyme family. It depends on Mg(2+) as a cofactor. Thiamine diphosphate is required as a cofactor.

The catalysed reaction is 3D-3,5/4-trihydroxycyclohexane-1,2-dione + H2O = 5-deoxy-D-glucuronate + H(+). Its pathway is polyol metabolism; myo-inositol degradation into acetyl-CoA; acetyl-CoA from myo-inositol: step 3/7. Functionally, involved in the cleavage of the C1-C2 bond of 3D-(3,5/4)-trihydroxycyclohexane-1,2-dione (THcHDO) to yield 5-deoxy-glucuronate (5DG). This is 3D-(3,5/4)-trihydroxycyclohexane-1,2-dione hydrolase from Shouchella clausii (strain KSM-K16) (Alkalihalobacillus clausii).